Here is a 72-residue protein sequence, read N- to C-terminus: Translation initiation factor IF-1 (72 aa).

The 72-residue stretch at 1–72 (MAKDDVIQMQ…SRARIVFRTK (72 aa)) folds into the S1-like domain.

Belongs to the IF-1 family. In terms of assembly, component of the 30S ribosomal translation pre-initiation complex which assembles on the 30S ribosome in the order IF-2 and IF-3, IF-1 and N-formylmethionyl-tRNA(fMet); mRNA recruitment can occur at any time during PIC assembly.

It is found in the cytoplasm. In terms of biological role, one of the essential components for the initiation of protein synthesis. Stabilizes the binding of IF-2 and IF-3 on the 30S subunit to which N-formylmethionyl-tRNA(fMet) subsequently binds. Helps modulate mRNA selection, yielding the 30S pre-initiation complex (PIC). Upon addition of the 50S ribosomal subunit IF-1, IF-2 and IF-3 are released leaving the mature 70S translation initiation complex. This Herminiimonas arsenicoxydans protein is Translation initiation factor IF-1.